We begin with the raw amino-acid sequence, 349 residues long: NADH-quinone oxidoreductase subunit H (349 aa).

A run of 8 helical transmembrane segments spans residues 16–36 (WPVVWTLLKIVAIVAPLMGCV), 88–108 (GLFIVGPILALAPSLVAWAVV), 123–143 (LLFLLAVTSMEVYGVIVAGWA), 157–177 (AAQMVSYEVSMGFALICVLLI), 202–222 (FLSWNWLPLLPMFVVYLISGI), 264–284 (ILVSILTSVLFLGGWLSPVGF), 285–305 (LPDGFHWLALKTASILFIFLW), and 325–345 (VFIPVTLVWVVVVAVWLMSPL).

Belongs to the complex I subunit 1 family. As to quaternary structure, NDH-1 is composed of 14 different subunits. Subunits NuoA, H, J, K, L, M, N constitute the membrane sector of the complex.

The protein resides in the cell inner membrane. It catalyses the reaction a quinone + NADH + 5 H(+)(in) = a quinol + NAD(+) + 4 H(+)(out). Its function is as follows. NDH-1 shuttles electrons from NADH, via FMN and iron-sulfur (Fe-S) centers, to quinones in the respiratory chain. The immediate electron acceptor for the enzyme in this species is believed to be ubiquinone. Couples the redox reaction to proton translocation (for every two electrons transferred, four hydrogen ions are translocated across the cytoplasmic membrane), and thus conserves the redox energy in a proton gradient. This subunit may bind ubiquinone. This chain is NADH-quinone oxidoreductase subunit H, found in Azoarcus sp. (strain BH72).